The primary structure comprises 194 residues: Peptidyl-tRNA hydrolase (194 aa).

Tyr-17 contacts tRNA. The Proton acceptor role is filled by His-22. TRNA contacts are provided by Tyr-68, Asn-70, and Asn-116.

The protein belongs to the PTH family. Monomer.

It is found in the cytoplasm. The catalysed reaction is an N-acyl-L-alpha-aminoacyl-tRNA + H2O = an N-acyl-L-amino acid + a tRNA + H(+). Hydrolyzes ribosome-free peptidyl-tRNAs (with 1 or more amino acids incorporated), which drop off the ribosome during protein synthesis, or as a result of ribosome stalling. In terms of biological role, catalyzes the release of premature peptidyl moieties from peptidyl-tRNA molecules trapped in stalled 50S ribosomal subunits, and thus maintains levels of free tRNAs and 50S ribosomes. This Chromohalobacter salexigens (strain ATCC BAA-138 / DSM 3043 / CIP 106854 / NCIMB 13768 / 1H11) protein is Peptidyl-tRNA hydrolase.